Reading from the N-terminus, the 181-residue chain is Adenine phosphoribosyltransferase (181 aa).

Belongs to the purine/pyrimidine phosphoribosyltransferase family. In terms of assembly, homodimer.

The protein localises to the cytoplasm. It catalyses the reaction AMP + diphosphate = 5-phospho-alpha-D-ribose 1-diphosphate + adenine. The protein operates within purine metabolism; AMP biosynthesis via salvage pathway; AMP from adenine: step 1/1. Its function is as follows. Catalyzes a salvage reaction resulting in the formation of AMP, that is energically less costly than de novo synthesis. The chain is Adenine phosphoribosyltransferase from Brucella abortus (strain S19).